We begin with the raw amino-acid sequence, 326 residues long: Heterodimeric geranylgeranyl pyrophosphate synthase small subunit, chloroplastic (326 aa).

The N-terminal 33 residues, 1-33 (MLFSGSAIPLSSFCSLPEKPHTLPMKLSPAAIR), are a transit peptide targeting the chloroplast. Isopentenyl diphosphate contacts are provided by Lys-88 and His-120. 2 residues coordinate Mg(2+): Asp-127 and Asp-133. A dimethylallyl diphosphate-binding site is contributed by Arg-138. Position 139 (Arg-139) interacts with isopentenyl diphosphate. Positions 220 and 258 each coordinate dimethylallyl diphosphate. Positions 274 to 301 (GAEKGMMEMAEELKEKAKKELQVFDNKY) form a coiled coil.

The protein belongs to the FPP/GGPP synthase family. In terms of assembly, part of a heterodimeric geranyl(geranyl)diphosphate synthase. Interacts with GGPPS1 or GGPPS2, but not with GGPPS9. Interacts with LIL3.1 and LIL3.2. Mg(2+) serves as cofactor. As to expression, expressed ubiquitously.

It localises to the plastid. It is found in the chloroplast thylakoid membrane. Its function is as follows. Heterodimeric geranyl(geranyl)-diphosphate (GPP) synthase small subunit. The small subunit alone is inactive in vitro while the large subunit GGPPS1 catalyzes mainly the production of geranygeranyl-diphosphate in vitro. Upon association of the two subunits, the product profile changes and the production of gerany-diphosphate is strongly increased. The protein is Heterodimeric geranylgeranyl pyrophosphate synthase small subunit, chloroplastic (GGR) of Arabidopsis thaliana (Mouse-ear cress).